The sequence spans 505 residues: Activin receptor type-1B (505 aa).

The signal sequence occupies residues 1–23 (MAESAGASSFFPLVVLLLAGSGG). Topologically, residues 24–126 (SGPRGIQALL…EHPSMWGPVE (103 aa)) are extracellular. Asparagine 43 is a glycosylation site (N-linked (GlcNAc...) asparagine). A helical transmembrane segment spans residues 127–149 (LVGIIAGPVFLLFLIIIIVFLVI). The Cytoplasmic segment spans residues 150 to 505 (NYHQRVYHNR…QLSVQEDVKI (356 aa)). The GS domain occupies 177-206 (KTLQDLVYDLSTSGSGSGLPLFVQRTVART). The Protein kinase domain maps to 207-497 (IVLQEIIGKG…LRIKKTLSQL (291 aa)). ATP is bound by residues 213–221 (IGKGRFGEV) and lysine 234. The Proton acceptor role is filled by aspartate 335. Tyrosine 380 carries the post-translational modification Phosphotyrosine.

It belongs to the protein kinase superfamily. TKL Ser/Thr protein kinase family. TGFB receptor subfamily. Forms an activin receptor complex with activin receptor type-2 (ACVR2A or ACVR2B). Part of a complex consisting of MAGI2/ARIP1, ACVR2A, ACVR1B and SMAD3. Interacts with SMAD2 and SMAD3. Interacts with SMAD7. Interacts with FKBP1A. Interacts with IGSF1. Interacts with CRIPTO. Interacts with TDP2. Interacts with TSC22D1/TSC-22. The cofactor is Mg(2+). Mn(2+) serves as cofactor. Autophosphorylated. Phosphorylated by activin receptor type-2 (ACVR2A or ACVR2B) in response to activin-binding at serine and threonine residues in the GS domain. Phosphorylation of ACVR1B by activin receptor type-2 regulates association with SMAD7. Post-translationally, ubiquitinated. Level of ubiquitination is regulated by the SMAD7-SMURF1 complex. In terms of processing, ubiquitinated. In terms of tissue distribution, urogenital ridge, testis, ovary, brain and lungs.

The protein localises to the cell membrane. The catalysed reaction is L-threonyl-[receptor-protein] + ATP = O-phospho-L-threonyl-[receptor-protein] + ADP + H(+). The enzyme catalyses L-seryl-[receptor-protein] + ATP = O-phospho-L-seryl-[receptor-protein] + ADP + H(+). Activin receptor type-2 (ACVR2A or ACVR2B) activates the type-1 receptor through phosphorylation of its regulatory GS domain. Its function is as follows. Transmembrane serine/threonine kinase activin type-1 receptor forming an activin receptor complex with activin receptor type-2 (ACVR2A or ACVR2B). Transduces the activin signal from the cell surface to the cytoplasm and is thus regulating a many physiological and pathological processes including neuronal differentiation and neuronal survival, hair follicle development and cycling, FSH production by the pituitary gland, wound healing, extracellular matrix production, immunosuppression and carcinogenesis. Activin is also thought to have a paracrine or autocrine role in follicular development in the ovary. Within the receptor complex, type-2 receptors (ACVR2A and/or ACVR2B) act as a primary activin receptors whereas the type-1 receptors like ACVR1B act as downstream transducers of activin signals. Activin binds to type-2 receptor at the plasma membrane and activates its serine-threonine kinase. The activated receptor type-2 then phosphorylates and activates the type-1 receptor such as ACVR1B. Once activated, the type-1 receptor binds and phosphorylates the SMAD proteins SMAD2 and SMAD3, on serine residues of the C-terminal tail. Soon after their association with the activin receptor and subsequent phosphorylation, SMAD2 and SMAD3 are released into the cytoplasm where they interact with the common partner SMAD4. This SMAD complex translocates into the nucleus where it mediates activin-induced transcription. Inhibitory SMAD7, which is recruited to ACVR1B through FKBP1A, can prevent the association of SMAD2 and SMAD3 with the activin receptor complex, thereby blocking the activin signal. Activin signal transduction is also antagonized by the binding to the receptor of inhibin-B via the IGSF1 inhibin coreceptor. ACVR1B also phosphorylates TDP2. The polypeptide is Activin receptor type-1B (Acvr1b) (Rattus norvegicus (Rat)).